The following is a 301-amino-acid chain: Transcription elongation factor A protein 1 (301 aa).

An N-acetylmethionine modification is found at Met1. The TFIIS N-terminal domain occupies 3–80 (DEVIRIAKKM…KSWKKLLDGP (78 aa)). A Glycyl lysine isopeptide (Lys-Gly) (interchain with G-Cter in ubiquitin) cross-link involves residue Lys55. Ser57, Ser81, Ser97, and Ser100 each carry phosphoserine. Positions 76–93 (LLDGPSTDKDSEEKKKDT) are enriched in basic and acidic residues. Residues 76-139 (LLDGPSTDKD…FPRAPSTSDS (64 aa)) form a disordered region. The 117-residue stretch at 140 to 256 (VRLKCREMLA…EHQMAKTGGT (117 aa)) folds into the TFIIS central domain. The TFIIS-type zinc finger occupies 259 to 299 (DLFTCGKCKKKNCTYTQVQTRSADEPMTTFVVCNECGNRWK). Cys263, Cys266, Cys291, and Cys294 together coordinate Zn(2+).

It belongs to the TFS-II family. Interacts with EAF2. Associates with UBR5 and forms a transcription regulatory complex made of CDK9, Pol II, UBR5 and TCEA1/TFIIS. Part of TBP-based Pol II pre-initiation complex (PIC), in which Pol II core assembles with general transcription factors and other specific initiation factors including GTF2E1, GTF2E2, GTF2F1, GTF2F2, TCEA1, ERCC2, ERCC3, GTF2H2, GTF2H3, GTF2H4, GTF2H5, GTF2A1, GTF2A2, GTF2B and TBP; this large multi-subunit PIC complex mediates DNA unwinding and targets Pol II core to the transcription start site where the first phosphodiester bond forms.

The protein localises to the nucleus. Its function is as follows. Necessary for efficient RNA polymerase II transcription elongation past template-encoded arresting sites. The arresting sites in DNA have the property of trapping a certain fraction of elongating RNA polymerases that pass through, resulting in locked ternary complexes. Cleavage of the nascent transcript by S-II allows the resumption of elongation from the new 3'-terminus. This is Transcription elongation factor A protein 1 (TCEA1) from Bos taurus (Bovine).